We begin with the raw amino-acid sequence, 538 residues long: Carboxypeptidase 2 (538 aa).

An N-terminal signal peptide occupies residues 1–21 (MVAYRFLTLISLGLGSHCVSA). A glycan (N-linked (GlcNAc...) asparagine) is linked at N46. The interval 53-76 (PAFTSPGTVSRGFSDGTSGPTRDE) is disordered. A Peptidase M14 domain is found at 71–351 (GPTRDETMEG…VMAKSVLQTA (281 aa)). Residues H136, E139, and H224 each coordinate Zn(2+). Residue E322 is the Proton donor/acceptor of the active site. N-linked (GlcNAc...) asparagine glycans are attached at residues N393 and N459.

The protein belongs to the peptidase M14 family. It depends on Zn(2+) as a cofactor.

It is found in the secreted. Its function is as follows. Extracellular metalloprotease that contributes to pathogenicity. The protein is Carboxypeptidase 2 (MCPB) of Trichophyton rubrum (Athlete's foot fungus).